A 343-amino-acid polypeptide reads, in one-letter code: Anthranilate phosphoribosyltransferase (343 aa).

5-phospho-alpha-D-ribose 1-diphosphate-binding positions include G84, 87-88 (GD), T92, 94-97 (NIST), 112-120 (KHGNRGVSS), and S124. Residue G84 coordinates anthranilate. Residue S96 coordinates Mg(2+). N115 contacts anthranilate. R170 is an anthranilate binding site. 2 residues coordinate Mg(2+): D229 and E230.

It belongs to the anthranilate phosphoribosyltransferase family. Homodimer. Requires Mg(2+) as cofactor.

It catalyses the reaction N-(5-phospho-beta-D-ribosyl)anthranilate + diphosphate = 5-phospho-alpha-D-ribose 1-diphosphate + anthranilate. The protein operates within amino-acid biosynthesis; L-tryptophan biosynthesis; L-tryptophan from chorismate: step 2/5. Its function is as follows. Catalyzes the transfer of the phosphoribosyl group of 5-phosphorylribose-1-pyrophosphate (PRPP) to anthranilate to yield N-(5'-phosphoribosyl)-anthranilate (PRA). The chain is Anthranilate phosphoribosyltransferase from Burkholderia thailandensis (strain ATCC 700388 / DSM 13276 / CCUG 48851 / CIP 106301 / E264).